Here is a 422-residue protein sequence, read N- to C-terminus: MDVLSPGQGNNTTSPPAPFETGGNTTGISDVTVSYQVITSLLLGTLIFCAVLGNACVVAAIALERSLQNVANYLIGSLAVTDLMVSVLVLPMAALYQVLNKWTLGQVTCDLFIALDVLCCTSSILHLCAIALDRYWAITDPIDYVNKRTPRRAAALISLTWLIGFLISIPPMLGWRTPEDRSDPDACTISKDHGYTIYSTFGAFYIPLLLMLVLYGRIFRAARFRIRKTVKKVEKTGADTRHGASPAPQPKKSVNGESGSRNWRLGVESKAGGALCANGAVRQGDDGAALEVIEVHRVGNSKEHLPLPSEAGPTPCAPASFERKNERNAEAKRKMALARERKTVKTLGIIMGTFILCWLPFFIVALVLPFCESSCHMPTLLGAIINWLGYSNSLLNPVIYAYFNKDFQNAFKKIIKCKFCRQ.

The segment at 1–23 is disordered; sequence MDVLSPGQGNNTTSPPAPFETGG. The Extracellular portion of the chain corresponds to 1 to 38; the sequence is MDVLSPGQGNNTTSPPAPFETGGNTTGISDVTVSYQVI. N-linked (GlcNAc...) asparagine glycosylation is found at N10, N11, and N24. A helical transmembrane segment spans residues 39–59; sequence TSLLLGTLIFCAVLGNACVVA. Residues 60–73 are Cytoplasmic-facing; that stretch reads AIALERSLQNVANY. The helical transmembrane segment at 74-98 threads the bilayer; it reads LIGSLAVTDLMVSVLVLPMAALYQV. Over 99 to 107 the chain is Extracellular; sequence LNKWTLGQV. A helical membrane pass occupies residues 108–132; that stretch reads TCDLFIALDVLCCTSSILHLCAIAL. C109 and C187 are disulfide-bonded. Residues D116 and C120 each contribute to the serotonin site. The DRY motif; important for ligand-induced conformation changes motif lies at 133–135; that stretch reads DRY. Residues 133-152 are Cytoplasmic-facing; it reads DRYWAITDPIDYVNKRTPRR. A helical transmembrane segment spans residues 153–174; sequence AAALISLTWLIGFLISIPPMLG. The Extracellular segment spans residues 175–193; it reads WRTPEDRSDPDACTISKDH. Residues 194–216 traverse the membrane as a helical segment; sequence GYTIYSTFGAFYIPLLLMLVLYG. At 217–346 the chain is on the cytoplasmic side; it reads RIFRAARFRI…LARERKTVKT (130 aa). Residues 235–262 form a disordered region; it reads KTGADTRHGASPAPQPKKSVNGESGSRN. T314, K345, T346, and G352 together coordinate 1D-myo-inositol 4-phosphate. A helical membrane pass occupies residues 347-370; that stretch reads LGIIMGTFILCWLPFFIVALVLPF. The Extracellular segment spans residues 371–378; sequence CESSCHMP. The chain crosses the membrane as a helical span at residues 379–403; it reads TLLGAIINWLGYSNSLLNPVIYAYF. The NPxxY motif; important for ligand-induced conformation changes and signaling signature appears at 396–400; sequence NPVIY. 1D-myo-inositol 4-phosphate is bound by residues F403, N404, and K405. The Cytoplasmic segment spans residues 404 to 422; the sequence is NKDFQNAFKKIIKCKFCRQ.

The protein belongs to the G-protein coupled receptor 1 family. 5-hydroxytryptamine receptor subfamily. HTR1A sub-subfamily. Heterodimer; heterodimerizes with GPER1. Interacts with YIF1B. Interacts with GPR39 and GALR1. In terms of tissue distribution, detected in lymph nodes, thymus and spleen. Detected in activated T-cells, but not in resting T-cells.

It is found in the cell membrane. It localises to the cell projection. Its subcellular location is the dendrite. With respect to regulation, G-protein coupled receptor activity is regulated by lipids: phosphatidylinositol 4-phosphate increases HTR1A-mediated activity. Binding to aripiprazol drug is regulated by cholesterol, which shapes the ligand-binding pocket, determining the specificity for aripiprazol. Activated by IHCH-7179 small molecule: IHCH-7179 acts both as an agonist activator for HTR1A and as an antagonist inhibitor for HTR2A. Activated by SEP-363856 small molecule: IHCH-7179 acts both as an agonist activator for HTR1A and TAAR1. Functionally, G-protein coupled receptor for 5-hydroxytryptamine (serotonin). Also functions as a receptor for various drugs and psychoactive substances. Ligand binding causes a conformation change that triggers signaling via guanine nucleotide-binding proteins (G proteins) and modulates the activity of downstream effectors, such as adenylate cyclase. HTR1A is coupled to G(i)/G(o) G alpha proteins and mediates inhibitory neurotransmission: signaling inhibits adenylate cyclase activity and activates a phosphatidylinositol-calcium second messenger system that regulates the release of Ca(2+) ions from intracellular stores. Beta-arrestin family members regulate signaling by mediating both receptor desensitization and resensitization processes. Plays a role in the regulation of 5-hydroxytryptamine release and in the regulation of dopamine and 5-hydroxytryptamine metabolism. Plays a role in the regulation of dopamine and 5-hydroxytryptamine levels in the brain, and thereby affects neural activity, mood and behavior. Plays a role in the response to anxiogenic stimuli. The polypeptide is 5-hydroxytryptamine receptor 1A (Homo sapiens (Human)).